A 1818-amino-acid chain; its full sequence is Nestin (1818 aa).

Residues 1–14 (WREKLEAEVQRQNL) are coil 1B. The 135-residue stretch at 1-135 (WREKLEAEVQ…TLLEAENSRL (135 aa)) folds into the IF rod domain. Residues 15–17 (YQE) form a linker 2 region. A coil 2B region spans residues 18–135 (RVAHMESSLG…TLLEAENSRL (118 aa)). Residue Ser133 is modified to Phosphoserine. The segment at 136-1818 (QTPGRSSQAS…DRDSWSSGED (1683 aa)) is tail. Phosphothreonine is present on residues Thr137 and Thr160. Ser180 carries the phosphoserine modification. Thr210 carries the phosphothreonine modification. Disordered stretches follow at residues 266 to 309 (EEAG…GSSI), 336 to 355 (AQET…SQGP), 377 to 451 (HETP…SPEG), and 480 to 787 (AFKK…EEDQ). Ser288 carries the phosphoserine modification. A compositionally biased stretch (basic and acidic residues) spans 292–303 (PVLEAKDGDSTE). Over residues 382–398 (KENCNSLRSVDENQGTL) the composition is skewed to polar residues. A phosphoserine mark is found at Ser390 and Ser400. Composition is skewed to basic and acidic residues over residues 400–427 (SPEE…EKGV) and 434–443 (LGKEDPRIED). Ser448 is modified (phosphoserine). Residues 495-508 (EIQRVERLIEKEGQ) are compositionally biased toward basic and acidic residues. Position 513 is a phosphoserine (Ser513). 2 stretches are compositionally biased toward basic and acidic residues: residues 521 to 536 (TDRP…LKPV) and 565 to 586 (TDRP…KEGQ). Phosphoserine is present on Ser591. Composition is skewed to basic and acidic residues over residues 599 to 614 (TDRP…LKPV), 643 to 664 (TDRP…KEGQ), and 711 to 732 (TDRP…KEGQ). Position 737 is a phosphoserine (Ser737). Basic and acidic residues predominate over residues 744–773 (ETYRLLEKENGEPLKPVEEEDQRVERLIEK). Residues Ser803 and Ser824 each carry the phosphoserine modification. The tract at residues 866–900 (ESLLKKGTQESLESHEDRNQETQDPQRFLEEEGQG) is disordered. Residues 868–886 (LLKKGTQESLESHEDRNQE) are compositionally biased toward basic and acidic residues. A phosphoserine mark is found at Ser915 and Ser957. The disordered stretch occupies residues 945-998 (SLLERESQDSGKSLEGQEAFRCLGKEDPESLQFPEVQDQEIQRSLQQETQQTLG). Over residues 986–997 (QRSLQQETQQTL) the composition is skewed to polar residues. A Glycyl lysine isopeptide (Lys-Gly) (interchain with G-Cter in SUMO1); alternate cross-link involves residue Lys1043. Lys1043 is covalently cross-linked (Glycyl lysine isopeptide (Lys-Gly) (interchain with G-Cter in SUMO2); alternate). A phosphoserine mark is found at Ser1052, Ser1063, Ser1073, Ser1123, Ser1134, Ser1162, and Ser1238. Disordered stretches follow at residues 1134 to 1262 (SPEA…LEGQ) and 1334 to 1818 (HPSL…SGED). Basic and acidic residues-rich tracts occupy residues 1342-1361 (VEAK…KEAG) and 1401-1416 (ASDH…RPSE). Positions 1490-1505 (QDWEESREESEADELG) are enriched in acidic residues. Phosphoserine occurs at positions 1495, 1499, and 1523. A compositionally biased stretch (acidic residues) spans 1570 to 1579 (LSSEEFEDLG). Phosphoserine occurs at positions 1614 and 1623. Residues 1616 to 1636 (GFADEEESGEEGEEEEHEDGT) show a composition bias toward acidic residues. The span at 1686-1697 (GLETESQDSAEP) shows a compositional bias: polar residues. Phosphoserine occurs at positions 1698, 1700, 1791, 1814, and 1815. Residues 1698–1708 (SGSEVSESVSS) show a composition bias toward low complexity.

Belongs to the intermediate filament family. As to quaternary structure, interacts with FHOD3. Forms homodimers and homotetramers in vitro. In mixtures with other intermediate filament proteins such as vimentin and alpha-internexin, preferentially forms heterodimers which can assemble to form intermediate filaments if nestin does not exceed 25%. Post-translationally, constitutively phosphorylated. This increases during mitosis when the cytoplasmic intermediate filament network is reorganized.

In terms of biological role, required for brain and eye development. Promotes the disassembly of phosphorylated vimentin intermediate filaments (IF) during mitosis and may play a role in the trafficking and distribution of IF proteins and other cellular factors to daughter cells during progenitor cell division. Required for survival, renewal and mitogen-stimulated proliferation of neural progenitor cells. The polypeptide is Nestin (Mesocricetus auratus (Golden hamster)).